Reading from the N-terminus, the 942-residue chain is Exopolysaccharide phosphotransferase SCO2592 (942 aa).

It belongs to the stealth family.

This Streptomyces coelicolor (strain ATCC BAA-471 / A3(2) / M145) protein is Exopolysaccharide phosphotransferase SCO2592.